The primary structure comprises 78 residues: Sec-independent protein translocase protein TatA (78 aa).

A helical transmembrane segment spans residues 1–21 (MGSLSIWHWLIVLLIVALVFG). Composition is skewed to basic and acidic residues over residues 39–57 (FKEG…RDQL) and 65–78 (VDAK…GDSR). The tract at residues 39 to 78 (FKEGMKDGETPEGQQRDQLSRTNTVDVDAKEKAPHSGDSR) is disordered.

Belongs to the TatA/E family. The Tat system comprises two distinct complexes: a TatABC complex, containing multiple copies of TatA, TatB and TatC subunits, and a separate TatA complex, containing only TatA subunits. Substrates initially bind to the TatABC complex, which probably triggers association of the separate TatA complex to form the active translocon.

It is found in the cell inner membrane. Its function is as follows. Part of the twin-arginine translocation (Tat) system that transports large folded proteins containing a characteristic twin-arginine motif in their signal peptide across membranes. TatA could form the protein-conducting channel of the Tat system. This Paraburkholderia phymatum (strain DSM 17167 / CIP 108236 / LMG 21445 / STM815) (Burkholderia phymatum) protein is Sec-independent protein translocase protein TatA.